Reading from the N-terminus, the 610-residue chain is UvrABC system protein C (610 aa).

The 79-residue stretch at 16-94 folds into the GIY-YIG domain; sequence SQPGVYRMYD…IKLYQPRYNV (79 aa). Residues 204-239 enclose the UVR domain; it reads DQVLTQLIARMEKASQDLAFEEAARIRDQIQAVRRV.

This sequence belongs to the UvrC family. In terms of assembly, interacts with UvrB in an incision complex.

Its subcellular location is the cytoplasm. The UvrABC repair system catalyzes the recognition and processing of DNA lesions. UvrC both incises the 5' and 3' sides of the lesion. The N-terminal half is responsible for the 3' incision and the C-terminal half is responsible for the 5' incision. The polypeptide is UvrABC system protein C (Salmonella paratyphi C (strain RKS4594)).